We begin with the raw amino-acid sequence, 473 residues long: Photosystem II CP43 reaction center protein (473 aa).

Residues 1-14 (MKTLYSLRRFYHVE) constitute a propeptide that is removed on maturation. Position 15 is an N-acetylthreonine (Thr15). Position 15 is a phosphothreonine (Thr15). 5 helical membrane passes run 69–93 (LFEVAHFVPEKPMYEQGLILLPHLA), 134–155 (LLGPETLEESFPFFGYVWKDRN), 178–200 (KALYFGGVYDTWAPGGGDVRKIT), 255–275 (KPFAWARRAFVWSGEAYLSYS), and 291–312 (WFNNTAYPSEFYGPTGPEASQA). Residue Glu367 coordinates [CaMn4O5] cluster. The chain crosses the membrane as a helical span at residues 447 to 471 (RARAAAAGFEKGIDRDFEPVLSMTP).

It belongs to the PsbB/PsbC family. PsbC subfamily. PSII is composed of 1 copy each of membrane proteins PsbA, PsbB, PsbC, PsbD, PsbE, PsbF, PsbH, PsbI, PsbJ, PsbK, PsbL, PsbM, PsbT, PsbX, PsbY, PsbZ, Psb30/Ycf12, at least 3 peripheral proteins of the oxygen-evolving complex and a large number of cofactors. It forms dimeric complexes. The cofactor is Binds multiple chlorophylls and provides some of the ligands for the Ca-4Mn-5O cluster of the oxygen-evolving complex. It may also provide a ligand for a Cl- that is required for oxygen evolution. PSII binds additional chlorophylls, carotenoids and specific lipids..

The protein localises to the plastid. Its subcellular location is the chloroplast thylakoid membrane. Functionally, one of the components of the core complex of photosystem II (PSII). It binds chlorophyll and helps catalyze the primary light-induced photochemical processes of PSII. PSII is a light-driven water:plastoquinone oxidoreductase, using light energy to abstract electrons from H(2)O, generating O(2) and a proton gradient subsequently used for ATP formation. This chain is Photosystem II CP43 reaction center protein, found in Chloranthus spicatus (Chulantree).